We begin with the raw amino-acid sequence, 392 residues long: Chorismate synthase (392 aa).

NADP(+) contacts are provided by R39 and R45. FMN-binding positions include 131–133 (RSS), 255–256 (NA), G300, 315–319 (KPIPT), and R341.

It belongs to the chorismate synthase family. Homotetramer. It depends on FMNH2 as a cofactor.

The enzyme catalyses 5-O-(1-carboxyvinyl)-3-phosphoshikimate = chorismate + phosphate. Its pathway is metabolic intermediate biosynthesis; chorismate biosynthesis; chorismate from D-erythrose 4-phosphate and phosphoenolpyruvate: step 7/7. In terms of biological role, catalyzes the anti-1,4-elimination of the C-3 phosphate and the C-6 proR hydrogen from 5-enolpyruvylshikimate-3-phosphate (EPSP) to yield chorismate, which is the branch point compound that serves as the starting substrate for the three terminal pathways of aromatic amino acid biosynthesis. This reaction introduces a second double bond into the aromatic ring system. This is Chorismate synthase from Leuconostoc mesenteroides subsp. mesenteroides (strain ATCC 8293 / DSM 20343 / BCRC 11652 / CCM 1803 / JCM 6124 / NCDO 523 / NBRC 100496 / NCIMB 8023 / NCTC 12954 / NRRL B-1118 / 37Y).